Consider the following 648-residue polypeptide: Threonine--tRNA ligase (648 aa).

Residues 1–63 (MTEINIEFPD…NENVKIEIVT (63 aa)) enclose the TGS domain. Residues 243 to 541 (DHRVIGNNLD…LIEMYKGAFP (299 aa)) form a catalytic region. Zn(2+) is bound by residues Cys-337, His-388, and His-518.

The protein belongs to the class-II aminoacyl-tRNA synthetase family. Homodimer. Zn(2+) is required as a cofactor.

The protein resides in the cytoplasm. It carries out the reaction tRNA(Thr) + L-threonine + ATP = L-threonyl-tRNA(Thr) + AMP + diphosphate + H(+). Its function is as follows. Catalyzes the attachment of threonine to tRNA(Thr) in a two-step reaction: L-threonine is first activated by ATP to form Thr-AMP and then transferred to the acceptor end of tRNA(Thr). Also edits incorrectly charged L-seryl-tRNA(Thr). The protein is Threonine--tRNA ligase of Pediococcus pentosaceus (strain ATCC 25745 / CCUG 21536 / LMG 10740 / 183-1w).